A 250-amino-acid chain; its full sequence is Flavin-dependent thymidylate synthase (250 aa).

In terms of domain architecture, ThyX spans 7 to 233 (LSVELIACSS…PTVFGDFQVE (227 aa)). DUMP-binding positions include 92–95 (ELVR), 103–107 (QLSQR), and Arg-172. FAD-binding positions include 95–97 (RHR) and Gln-103. The ThyX motif motif lies at 95–105 (RHRHFSFSQLS). Residues 188–190 (NFR) and His-194 contribute to the FAD site. Position 199 (Arg-199) interacts with dUMP. The active-site Involved in ionization of N3 of dUMP, leading to its activation is the Arg-199.

Belongs to the thymidylate synthase ThyX family. Homotetramer. The cofactor is FAD.

The enzyme catalyses dUMP + (6R)-5,10-methylene-5,6,7,8-tetrahydrofolate + NADPH + H(+) = dTMP + (6S)-5,6,7,8-tetrahydrofolate + NADP(+). The protein operates within pyrimidine metabolism; dTTP biosynthesis. Catalyzes the reductive methylation of 2'-deoxyuridine-5'-monophosphate (dUMP) to 2'-deoxythymidine-5'-monophosphate (dTMP) while utilizing 5,10-methylenetetrahydrofolate (mTHF) as the methyl donor, and NADPH and FADH(2) as the reductant. This chain is Flavin-dependent thymidylate synthase, found in Corynebacterium efficiens (strain DSM 44549 / YS-314 / AJ 12310 / JCM 11189 / NBRC 100395).